We begin with the raw amino-acid sequence, 419 residues long: L-rhamnose isomerase (419 aa).

3 residues coordinate Mn(2+): histidine 262, aspartate 294, and aspartate 296.

Belongs to the rhamnose isomerase family. Homotetramer. Mn(2+) is required as a cofactor.

It is found in the cytoplasm. It catalyses the reaction L-rhamnopyranose = L-rhamnulose. It participates in carbohydrate degradation; L-rhamnose degradation; glycerone phosphate from L-rhamnose: step 1/3. Functionally, catalyzes the interconversion of L-rhamnose and L-rhamnulose. This chain is L-rhamnose isomerase, found in Salmonella enteritidis PT4 (strain P125109).